We begin with the raw amino-acid sequence, 2196 residues long: MSLNEIAHDQPVENGPLYSEKQDHTAVDYALHILFTQFVRLSEQKISFLSRYHANEGKNAEPVRFNVGEQEAILLLKKGEDNEFDRCIQALVALASSKPVAVIESLLCWRKVRVDITSSSGTPRVVNERRSSISIYILCRVLTEIAETIPSNALEESTVSCLLECVFHQLLSAKNLPVSSSYFSLANWESFAFLVGSMSRFNFVMVSDRFIEEIEHLEKSGCDSRQKETVLVHLLRAMRYLRLQLYPTTLLEESIAFLQSLTSFFMKANTALKIEYAYLMEQLLRPLISRATFEVNIPAWSRTIETIYPVVLKMCTKTKYWNVFFPFCCTLLCLSPKQFFLKHWISSLDAAFFRVKDRRLRNTGLPHLSRVVWTYSNQYKEEPSIMNSNISNILKSGFSIGKKFSVVPFATLEELDGYAQIVRVVGAHFPELVIKEILTPLSTDAFTENIGPEKLMIVVRSVYYILHDMKYKKSDSTIFEYIEFEFVDLHEVAVGTPLQQFVHNLSQKLLFLVFQLSTNTNCYLDSKNATSLLALYINALKVFPCLMGKLEQRVIDAYVKCLNCSNKIIHTVCHNSLIYFSSGLKMSKSVISCLSRKLVKGSEYLLRTYHEVIRIWISQQEAVIEKRNSVLSNKSCASSESNTPASVKQDYDDIQSWTIIEEIQSLGVLHLSSPSVGIRKFAVALLNDVKQLNTEYLMLSSDKVEVGDIYSEPTIVDVLKDCDSSILSVESHLPTAAERSRLRKFINDGTKDMLLKLATSNSGVDISIWYNVFPRFIKVCFERFPTTMALLRNTVCEKLPSITMQLLSRIESSELNFNLKSAVKNDNFPEFLLVQWKLYLIVACCTITYTSNVDYSHTDLRRTLTAVQSGNHLRGLQETIKITSAESLFSMVLPLIFTEFSPIREAVVFAIGCINVNAFPQLVRSLKPYISVLKQDHQEFIFAGLNFPSVKRRNKPDLLLRSEIAHIFAMTSHLLLHELLNEDREALSVISEFLKDLKGFLSTPNVQADEKYLKLRCYFSQLLEKVLLVQNLHPSSEVLPFSGRASCWKLLDEWTGFGPARAITKNREELMRAHIRGNNKDIRERDKLLASFEAGKQNLEYLAIKAMIALCTAKLQQELTEGVFLFDIEILLNWFTAVFGSPSKAIVGLARKGLTALLLENSSNEVLLQKVINRCFSKEISQTISNYYFLSLSEMLIQINPNNLSKPKLLPLCLVNLSTNNLSVRLKAFELLGNFHLNNFTMTALMEFKTFLESSNPALYLKPQYLFSVQLASDFTEDSFTLTSECLRYFNYGHQHRRGLVTVLLPWLQNLELKMDVENKTFDSFTAVILIDLIEVTAKFTNDLPNEIEALWTSLALSRHKSNWTVILFFLMQQCYQRKTFSFVDCTRQITIYLAKTELLSDLYSTLLSFVCPANVSNENQEVYKFSLEDLSSTYVANLEDLFPSEKNHISYSPCQLSLLLLMDILPNPSIITVTDDVATILHAAFIQFDHYSRIVQEQCQQIFQYVVRKVLAMEGRLDYDDAYFDFNVESSLITGLRGKTKKEDDLVKYHNMILKTIELLSSSYPELKQIWGEVALSWATTCPSRRLACNSFQLFRSLLPDFDARMLLEIISRLVGTISDETSYLRDYSVEILRTFNSYVLVMNSDDLLSYSQILWTAIACLTTIHEDEFIESVKIAYAYFLRVEETDSATQQIMETFPQNWVGDYQGLQILILKGFRSTNSFEITMNFFLLLMDFKDNDLVGVGYLRILSCLLVSLPAMVYTYEHSDPITFDLSVFCHKLATLASQFNDDALIELLDTYLKRKFRSIKDFLKHTVSYLYSYYFEDYELEIVSTLTMFLSNNLTWFRKSTLDVLKELFPLIDFQKPIYSEHGLGIVSPLLRLLPTGYAMEALSLLTDSVLHVSAPTDMQTLKLLMVDPKLKNSDDRLAGFFEIPDEDGWYEPNSEYAAAITKSNVHAVFYSCSTTEASVSTPEVRFHADEVSNYPRHVPTDSHGSLDENSLGELVTTLHSLDVFFAEDRDEELIQPDVAVDPKLDITSEDYDDRIATILSGSLRRQKQGLMAYETESFRDYSPNEEIDASAKLPMDMPPVRVRKSSFISKLKPHYFMDAESYYPSLKALGNSAEHRLSLDEIRGAAELKQNKNWNSMLDQSVSMINEDSVEDHETHENYYHLRTMFQGSESNESFTDTTRSRGWH.

To yeast TAO3/PAG1.

The protein resides in the cytoplasm. The protein localises to the membrane. Functionally, required for the maintenance of cell polarity. Has a role in localizing F-actin at the cell tips. This chain is Cell polarity protein mor2 (mor2), found in Schizosaccharomyces pombe (strain 972 / ATCC 24843) (Fission yeast).